The sequence spans 686 residues: Homoaconitase, mitochondrial (686 aa).

Residues 1–17 (MRVVRCVRRFSASRAVS) constitute a mitochondrion transit peptide. Residues Cys-337, Cys-401, and Cys-404 each coordinate [4Fe-4S] cluster.

The protein belongs to the aconitase/IPM isomerase family. [4Fe-4S] cluster is required as a cofactor.

The protein resides in the mitochondrion. It catalyses the reaction (2R,3S)-homoisocitrate = cis-homoaconitate + H2O. It functions in the pathway amino-acid biosynthesis; L-lysine biosynthesis via AAA pathway; L-alpha-aminoadipate from 2-oxoglutarate: step 3/5. Its function is as follows. Catalyzes the reversible hydration of cis-homoaconitate to (2R,3S)-homoisocitrate, a step in the alpha-aminoadipate pathway for lysine biosynthesis. The protein is Homoaconitase, mitochondrial (LYS4) of Eremothecium gossypii (strain ATCC 10895 / CBS 109.51 / FGSC 9923 / NRRL Y-1056) (Yeast).